The primary structure comprises 407 residues: Membrane protein MosC (407 aa).

A disordered region spans residues 1-24; the sequence is MTRTSPRHHAPSETKRRVPMGGVH. Helical transmembrane passes span 31–51, 69–89, 109–129, 157–177, 186–206, 225–245, 255–275, 290–310, 316–336, 347–367, and 377–397; these read LTIT…AAWA, GVLL…AGYF, ALVL…IVLF, AFLH…FGVI, SVTL…HLLD, LLMF…IAEW, QVTD…MIAG, ALIA…LFMP, LAGF…IFSE, VGLT…PPII, and GRAL…SVFF.

It is found in the cell membrane. Functionally, may be a membrane transport protein that could either transport a precursor for rhizopine biosynthesis into bacteroids or the finished product from the bacteroids. The sequence is that of Membrane protein MosC (mosC) from Rhizobium meliloti (Ensifer meliloti).